The sequence spans 195 residues: Imidazoleglycerol-phosphate dehydratase (195 aa).

Belongs to the imidazoleglycerol-phosphate dehydratase family.

It is found in the cytoplasm. It catalyses the reaction D-erythro-1-(imidazol-4-yl)glycerol 3-phosphate = 3-(imidazol-4-yl)-2-oxopropyl phosphate + H2O. It functions in the pathway amino-acid biosynthesis; L-histidine biosynthesis; L-histidine from 5-phospho-alpha-D-ribose 1-diphosphate: step 6/9. This chain is Imidazoleglycerol-phosphate dehydratase, found in Cereibacter sphaeroides (strain ATCC 17023 / DSM 158 / JCM 6121 / CCUG 31486 / LMG 2827 / NBRC 12203 / NCIMB 8253 / ATH 2.4.1.) (Rhodobacter sphaeroides).